Consider the following 353-residue polypeptide: C-X-C chemokine receptor type 4 (353 aa).

The interval 1-22 (MEELHIYPSDNYTEEDLGSGDY) is important for chemokine binding and signaling. At 1–39 (MEELHIYPSDNYTEEDLGSGDYDSMKEPCFREENAHFNR) the chain is on the extracellular side. Tyr-7 bears the Sulfotyrosine mark. An N-linked (GlcNAc...) asparagine glycan is attached at Asn-11. A Sulfotyrosine modification is found at Tyr-12. Ser-19 carries an O-linked (Xyl...) (chondroitin sulfate) serine glycan. Tyr-22 is subject to Sulfotyrosine. Cystine bridges form between Cys-29-Cys-275 and Cys-110-Cys-187. The chain crosses the membrane as a helical span at residues 40-64 (IFLPTVYSIIFLTGIVGNGLVILVM). Over 65–78 (GYQKKLRSMTDKYR) the chain is Cytoplasmic. A helical transmembrane segment spans residues 79–100 (LHLSVADLLFVLTLPFWAVEAV). A chemokine binding region spans residues 95–98 (WAVE). Over 101 to 111 (ANWYFGNFLCK) the chain is Extracellular. Residues 112 to 131 (AVHVIYTVNLYSSVLILAFI) form a helical membrane-spanning segment. The tract at residues 114-118 (HVIYT) is chemokine binding. At 132-155 (SLDRYLAIVHATNSQRPRKLLAEK) the chain is on the cytoplasmic side. Residues 134–136 (DRY) carry the Important for signaling motif. Positions 136-148 (YLAIVHATNSQRP) are involved in dimerization; when bound to chemokine. A helical transmembrane segment spans residues 156–175 (VVYVGVWIPALLLTIPDFIF). Residues 176-196 (ANVREADDRYICDRFYPNDSW) lie on the Extracellular side of the membrane. The interval 187 to 191 (CDRFY) is chemokine binding, important for signaling. The segment at 192–211 (PNDSWLVVFQFQHIMVGLIL) is involved in dimerization. A helical membrane pass occupies residues 197–217 (LVVFQFQHIMVGLILPGIVIL). The Cytoplasmic portion of the chain corresponds to 218–242 (SCYCIIISKLSHSKGYQKRKALKTT). The chain crosses the membrane as a helical span at residues 243-262 (VILILAFFACWLPYYIGISI). At 263-283 (DSFILLEIIKQGCEFEKTVHK) the chain is on the extracellular side. Residues 267–269 (LLE) form an involved in dimerization region. Residues 284–303 (WISITEALAFFHCCLNPILY) form a helical membrane-spanning segment. Over 304-353 (AFLGAKFKTSAQHALTSVSRGSSLKILSKGKRGGHSSVSTESESSSFHSS) the chain is Cytoplasmic. Residues Ser-320 and Ser-322 each carry the phosphoserine modification. Residues Ser-325 and Ser-326 each carry the phosphoserine; by PKC and GRK6 modification. Residues 330–353 (LSKGKRGGHSSVSTESESSSFHSS) are disordered. Ser-331 is modified (phosphoserine; by GRK6). Lys-332 is covalently cross-linked (Glycyl lysine isopeptide (Lys-Gly) (interchain with G-Cter in ubiquitin)). Positions 338–353 (HSSVSTESESSSFHSS) are enriched in low complexity. The residue at position 340 (Ser-340) is a Phosphoserine; by GRK6. Phosphoserine occurs at positions 349 and 352.

It belongs to the G-protein coupled receptor 1 family. In terms of assembly, monomer. Can form homodimers. Interacts with CD164. Interacts with ARRB2; the interaction is dependent on the C-terminal phosphorylation of CXCR4 and allows activation of MAPK1 and MAPK3. Interacts with ARR3; the interaction is dependent on the C-terminal phosphorylation of CXCR4 and modulates calcium mobilization. Interacts with RNF113A; the interaction, enhanced by CXCL12, promotes CXCR4 ubiquitination and subsequent degradation. Interacts (via the cytoplasmic C-terminal) with ITCH (via the WW domains I and II); the interaction, enhanced by CXCL12, promotes CXCR4 ubiquitination and leads to its degradation. Interacts with extracellular ubiquitin. Interacts with DBN1; this interaction is enhanced by antigenic stimulation. Following LPS binding, may form a complex with GDF5, HSP90AA1 and HSPA8. In terms of processing, phosphorylated on agonist stimulation. Rapidly phosphorylated on serine and threonine residues in the C-terminal. Phosphorylation at Ser-325 and Ser-326 leads to recruitment of ITCH, ubiquitination and protein degradation. Ubiquitinated after ligand binding, leading to its degradation. Ubiquitinated by ITCH at the cell membrane on agonist stimulation. The ubiquitin-dependent mechanism, endosomal sorting complex required for transport (ESCRT), then targets CXCR4 for lysosomal degradation. This process is dependent also on prior Ser-/Thr-phosphorylation in the C-terminal of CXCR4. Also binding of ARRB1 to STAM negatively regulates CXCR4 sorting to lysosomes though modulating ubiquitination of SFR5S. Post-translationally, sulfation is required for efficient binding of CXCL12/SDF-1alpha and promotes its dimerization. In terms of processing, O- and N-glycosylated. N-glycosylation can mask coreceptor function. The O-glycosylation chondroitin sulfate attachment does not affect interaction with CXCL12/SDF-1alpha nor its coreceptor activity.

It is found in the cell membrane. The protein localises to the cell junction. It localises to the early endosome. The protein resides in the late endosome. Its subcellular location is the lysosome. In terms of biological role, receptor for the C-X-C chemokine CXCL12/SDF-1 that transduces a signal by increasing intracellular calcium ion levels and enhancing MAPK1/MAPK3 activation. Involved in the AKT signaling cascade. Plays a role in regulation of cell migration, e.g. during wound healing. Acts as a receptor for extracellular ubiquitin; leading to enhanced intracellular calcium ions and reduced cellular cAMP levels. Binds bacterial lipopolysaccharide (LPS) et mediates LPS-induced inflammatory response, including TNF secretion by monocytes. Involved in hematopoiesis and in cardiac ventricular septum formation. Also plays an essential role in vascularization of the gastrointestinal tract, probably by regulating vascular branching and/or remodeling processes in endothelial cells. Involved in cerebellar development. In the CNS, could mediate hippocampal-neuron survival. In Canis lupus familiaris (Dog), this protein is C-X-C chemokine receptor type 4 (CXCR4).